An 834-amino-acid chain; its full sequence is MKYKNLMARALYDNVPECAEELAFRKGDILTVIEQNTGGLEGWWLCSLHGRQGIVPGNRVKLLIGPMQETASSHEQPASGLMQQTFGQQKLYQVPNPQAAPRDTIYQVPPSYQNQGIYQVPTGHGTQEQEVYQVPPSVQRSIGGTSGPHVGKKVITPVRTGHGYVYEYPSRYQKDVYDIPPSHTTQGVYDIPPSSAKGPVFSVPVGEIKPQGVYDIPPTKGVYAIPPSACRDEAGLREKDYDFPPPMRQAGRPDLRPEGVYDIPPTCTKPAGKDLHVKYNCDIPGAAEPVARRHQSLSPNHPPPQLGQSVGSQNDAYDVPRGVQFLEPPAETSEKANPQERDGVYDVPLHNPPDAKGSRDLVDGINRLSFSSTGSTRSNMSTSSTSSKESSLSASPAQDKRLFLDPDTAIERLQRLQQALEMGVSSLMALVTTDWRCYGYMERHINEIRTAVDKVELFLKEYLHFVKGAVANAACLPELILHNKMKRELQRVEDSHQILSQTSHDLNECSWSLNILAINKPQNKCDDLDRFVMVAKTVPDDAKQLTTTINTNAEALFRPGPGSLHLKNGPESIMNSTEYPHGGSQGQLLHPGDHKAQAHNKALPPGLSKEQAPDCSSSDGSERSWMDDYDYVHLQGKEEFERQQKELLEKENIMKQNKMQLEHHQLSQFQLLEQEITKPVENDISKWKPSQSLPTTNSGVSAQDRQLLCFYYDQCETHFISLLNAIDALFSCVSSAQPPRIFVAHSKFVILSAHKLVFIGDTLTRQVTAQDIRNKVMNSSNQLCEQLKTIVMATKMAALHYPSTTALQEMVHQVTDLSRNAQLFKRSLLEMATF.

Positions 1-505 (MKYKNLMARA…HQILSQTSHD (505 aa)) are required for interaction with ITCH. The 63-residue stretch at 3–65 (YKNLMARALY…PGNRVKLLIG (63 aa)) folds into the SH3 domain. Phosphotyrosine; by ABL1 is present on residues Tyr92, Tyr164, Tyr166, Tyr177, Tyr189, Tyr214, and Tyr223. Positions 102–229 (RDTIYQVPPS…KGVYAIPPSA (128 aa)) are interacts strongly with spindle-regulatory protein D1M1. Positions 238–260 (EKDYDFPPPMRQAGRPDLRPEGV) are disordered. Tyr279 is subject to Phosphotyrosine; by ABL1. Residues 291 to 316 (ARRHQSLSPNHPPPQLGQSVGSQNDA) are disordered. Ser296 bears the Phosphoserine mark. Residues 306–315 (LGQSVGSQND) are compositionally biased toward polar residues. Tyr317 is modified (phosphotyrosine; by ABL1). Disordered regions lie at residues 328 to 398 (PPAE…SPAQ) and 560 to 623 (GPGS…GSER). Residues 332–344 (TSEKANPQERDGV) are compositionally biased toward basic and acidic residues. Residues 351–834 (NPPDAKGSRD…KRSLLEMATF (484 aa)) form an interacts with CTTN region. The Caspase cleavage related site signature appears at 360–363 (DLVD). At Ser369 the chain carries Phosphoserine. A compositionally biased stretch (low complexity) spans 369–395 (SFSSTGSTRSNMSTSSTSSKESSLSAS). A divergent helix-loop-helix motif region spans residues 710-760 (FYYDQCETHFISLLNAIDALFSCVSSAQPPRIFVAHSKFVILSAHKLVFIG). Positions 710–834 (FYYDQCETHF…KRSLLEMATF (125 aa)) are required for interaction with PLK1. A Phosphoserine; by CSNK1D and CSNK1E modification is found at Ser780. Residue Thr804 is modified to Phosphothreonine; by CSNK1E.

It belongs to the CAS family. As to quaternary structure, homodimer. Forms heterodimers with BCAR1/p130cas. Forms complexes with PTK2B/RAFTK, adapter protein CRKL and LYN kinase. Part of a complex composed of NEDD9, AURKA and CTTN; within the complex NEDD9 acts as a scaffold protein and is required for complex formation. Part of a ternary complex composed of SMAD3, ITCH/AIP4 and NEDD9/HEF1; within the complex NEDD9/HEF1 interacts (via N-terminus) with ITCH/AIP4 (via WW domains); the complex mediates ubiquitination and proteasomal degradation of NEDD9/HEF1. Interacts with SMAD3; the interaction promotes NEDD9 ubiquitination and proteasomal degradation. Interacts with ID2. Interacts with CTTN (via N-terminus). Interacts with MICAL. Interacts with TXNL4/DIM1. Interacts with BCAR3 (via Ras-GEF domain). Interacts with SH2D3C isoform 1 and isoform 2. Interacts with ECT2. Interacts with PTPN11/SHP-2 (via SH2 domains); the interaction is enhanced when NEDD9/CAS-L is tyrosine phosphorylated. Interacts (via C-terminus) with PLK1 (via polo box domains). Interacts with NKX2-5. Interacts with SMAD3; the interaction is inhibited by oxidation of NEDD9. Interacts with NEDD9/HEF1; interaction is induced by CXCL12 promotion of ABL-mediated phosphorylation of NEDD9/HEF1. Interacts (via SH3 domain) with PTK2/FAK. Interacts with FYN; in the presence of PTK2. Interacts with INPPL1/SHIP2. In terms of processing, cell cycle-regulated processing produces four isoforms: p115, p105, p65, and p55. Isoform p115 arises from p105 phosphorylation and appears later in the cell cycle. Isoform p55 arises from p105 as a result of cleavage at a caspase cleavage-related site and it appears specifically at mitosis. The p65 isoform is poorly detected. Post-translationally, polyubiquitinated by ITCH/AIP4, leading to proteasomal degradation. PTK2/FAK1 phosphorylates the protein at the YDYVHL motif (conserved among all cas proteins) following integrin stimulation. The SRC family kinases (FYN, SRC, LCK and CRK) are recruited to the phosphorylated sites and can phosphorylate other tyrosine residues. Ligation of either integrin beta-1 or B-cell antigen receptor on tonsillar B-cells and B-cell lines promotes tyrosine phosphorylation and both integrin and BCR-mediated tyrosine phosphorylation requires an intact actin network. Phosphorylation is required to recruit NEDD9 to T-cell receptor microclusters at the periphery of newly formed immunological synapses. In fibroblasts transformation with oncogene v-ABL results in an increase in tyrosine phosphorylation. Transiently phosphorylated following CD3 cross-linking and this phosphorylated form binds to CRKL and C3G. A mutant lacking the SH3 domain is phosphorylated upon CD3 cross-linking but not upon integrin beta-1 cross-linking. Tyrosine phosphorylation occurs upon stimulation of the G-protein coupled C1a calcitonin receptor. Calcitonin-stimulated tyrosine phosphorylation is mediated by calcium- and protein kinase C-dependent mechanisms and requires the integrity of the actin cytoskeleton. Phosphorylation at Ser-369 induces proteasomal degradation. Phosphorylated by LYN. Phosphorylation at Ser-780 by CSNK1D or CSNK1E, or phosphorylation of Thr-804 by CSNK1E enhances the interaction of NEDD9 with PLK1. Expressed in B-cells (at protein level). Expressed in the respiratory epithelium of the main bronchi to the bronchioles in the lungs (at protein level). High levels detected in kidney, lung, and placenta. Expressed in lymphocytes.

The protein localises to the cytoplasm. It localises to the cell cortex. It is found in the nucleus. Its subcellular location is the golgi apparatus. The protein resides in the cell projection. The protein localises to the lamellipodium. It localises to the cell junction. It is found in the focal adhesion. Its subcellular location is the cytoskeleton. The protein resides in the spindle pole. The protein localises to the cilium. It localises to the cilium basal body. It is found in the basolateral cell membrane. Its subcellular location is the spindle. Its function is as follows. Scaffolding protein which plays a central coordinating role for tyrosine-kinase-based signaling related to cell adhesion. As a focal adhesion protein, plays a role in embryonic fibroblast migration. May play an important role in integrin beta-1 or B cell antigen receptor (BCR) mediated signaling in B- and T-cells. Integrin beta-1 stimulation leads to recruitment of various proteins including CRKL and SHPTP2 to the tyrosine phosphorylated form. Promotes adhesion and migration of lymphocytes; as a result required for the correct migration of lymphocytes to the spleen and other secondary lymphoid organs. Plays a role in the organization of T-cell F-actin cortical cytoskeleton and the centralization of T-cell receptor microclusters at the immunological synapse. Negatively regulates cilia outgrowth in polarized cysts. Modulates cilia disassembly via activation of AURKA-mediated phosphorylation of HDAC6 and subsequent deacetylation of alpha-tubulin. Positively regulates RANKL-induced osteoclastogenesis. Required for the maintenance of hippocampal dendritic spines in the dentate gyrus and CA1 regions, thereby involved in spatial learning and memory. This chain is Enhancer of filamentation 1, found in Homo sapiens (Human).